A 377-amino-acid polypeptide reads, in one-letter code: MAKRDYYEVLGVAKNASDEDLKKAYRKLAMKYHPDRNPDSKEAEEKFKEAKEAYEVLGDEQKRAAYDRYGHAGVDPNAAGMGGGMGGGMGGGFADAFGDIFGEIFGAGRRGGGGPQVYRGADLKYALEITLEQAASGFDTEIRVPSWENCDTCHGSGAKAGTSPKTCRTCGGSGAVRMQQGFFSVQQTCPTCHGTGKEITDPCPSCDGVGRTRRNKTLQVKIPAGIDDGMRIRSSGNGEPGINGGPPGDLYVEIHIKQHKIFQRDGDDLHCELTIPFTTAALGGELQVPTLGGKAEISIPEGTQSGKTFRLRAKGIRGVRGSYPGDLYCHVVVETPVRLSDEQKAILRQFEASLNDGGDRHSPQSKSWTDRVKEFFS.

The J domain occupies 5-70; that stretch reads DYYEVLGVAK…QKRAAYDRYG (66 aa). The segment at 137 to 215 adopts a CR-type zinc-finger fold; the sequence is GFDTEIRVPS…CDGVGRTRRN (79 aa). Cys-150, Cys-153, Cys-167, Cys-170, Cys-189, Cys-192, Cys-203, and Cys-206 together coordinate Zn(2+). CXXCXGXG motif repeat units lie at residues 150 to 157, 167 to 174, 189 to 196, and 203 to 210; these read CDTCHGSG, CRTCGGSG, CPTCHGTG, and CPSCDGVG.

The protein belongs to the DnaJ family. In terms of assembly, homodimer. The cofactor is Zn(2+).

Its subcellular location is the cytoplasm. Its function is as follows. Participates actively in the response to hyperosmotic and heat shock by preventing the aggregation of stress-denatured proteins and by disaggregating proteins, also in an autonomous, DnaK-independent fashion. Unfolded proteins bind initially to DnaJ; upon interaction with the DnaJ-bound protein, DnaK hydrolyzes its bound ATP, resulting in the formation of a stable complex. GrpE releases ADP from DnaK; ATP binding to DnaK triggers the release of the substrate protein, thus completing the reaction cycle. Several rounds of ATP-dependent interactions between DnaJ, DnaK and GrpE are required for fully efficient folding. Also involved, together with DnaK and GrpE, in the DNA replication of plasmids through activation of initiation proteins. The sequence is that of Chaperone protein DnaJ from Bordetella parapertussis (strain 12822 / ATCC BAA-587 / NCTC 13253).